Here is a 516-residue protein sequence, read N- to C-terminus: Probable serine/threonine-protein kinase ECU02_0550 (516 aa).

The 227-residue stretch at 4 to 230 (YKLRQVIGEG…ASEALMHRSF (227 aa)) folds into the Protein kinase domain. Residues 10–18 (IGEGASSTV) and lysine 32 contribute to the ATP site. The active-site Proton acceptor is aspartate 120.

Belongs to the protein kinase superfamily. CAMK Ser/Thr protein kinase family.

The catalysed reaction is L-seryl-[protein] + ATP = O-phospho-L-seryl-[protein] + ADP + H(+). The enzyme catalyses L-threonyl-[protein] + ATP = O-phospho-L-threonyl-[protein] + ADP + H(+). This Encephalitozoon cuniculi (strain GB-M1) (Microsporidian parasite) protein is Probable serine/threonine-protein kinase ECU02_0550.